We begin with the raw amino-acid sequence, 339 residues long: Phenylalanine--tRNA ligase alpha subunit (339 aa).

Residue glutamate 254 coordinates Mg(2+).

This sequence belongs to the class-II aminoacyl-tRNA synthetase family. Phe-tRNA synthetase alpha subunit type 1 subfamily. Tetramer of two alpha and two beta subunits. Mg(2+) is required as a cofactor.

It is found in the cytoplasm. The enzyme catalyses tRNA(Phe) + L-phenylalanine + ATP = L-phenylalanyl-tRNA(Phe) + AMP + diphosphate + H(+). This is Phenylalanine--tRNA ligase alpha subunit from Dictyoglomus thermophilum (strain ATCC 35947 / DSM 3960 / H-6-12).